Here is a 160-residue protein sequence, read N- to C-terminus: Cytochrome b6-f complex subunit 4 (160 aa).

3 helical membrane passes run 36-56 (ILYM…GLAI), 95-115 (LLGI…PFIE), and 127-147 (PIAM…GAGA).

This sequence belongs to the cytochrome b family. PetD subfamily. The 4 large subunits of the cytochrome b6-f complex are cytochrome b6, subunit IV (17 kDa polypeptide, PetD), cytochrome f and the Rieske protein, while the 4 small subunits are PetG, PetL, PetM and PetN. The complex functions as a dimer.

The protein resides in the cellular thylakoid membrane. Component of the cytochrome b6-f complex, which mediates electron transfer between photosystem II (PSII) and photosystem I (PSI), cyclic electron flow around PSI, and state transitions. The polypeptide is Cytochrome b6-f complex subunit 4 (Synechocystis sp. (strain ATCC 27184 / PCC 6803 / Kazusa)).